Reading from the N-terminus, the 542-residue chain is Phenylacetone monooxygenase (542 aa).

FAD-binding positions include S27, E46, 54-57 (VWYW), D66, Y72, V119, and Q152. NADP(+) is bound at residue 64–66 (RCD). NADP(+) is bound by residues 194–200 (TGSSGIQ), 217–218 (RT), and 336–337 (KR). FAD is bound at residue M446. Residue W501 coordinates NADP(+).

It belongs to the FAD-binding monooxygenase family. As to quaternary structure, monomer. Requires FAD as cofactor.

The catalysed reaction is phenylacetone + NADPH + O2 + H(+) = benzyl acetate + NADP(+) + H2O. Its function is as follows. Catalyzes a Baeyer-Villiger oxidation reaction, i.e. the insertion of an oxygen atom into a carbon-carbon bond adjacent to a carbonyl, which converts ketones to esters. Is most efficient with phenylacetone as substrate, leading to the formation of benzyl acetate. Can also oxidize other aromatic ketones (benzylacetone, alpha-methylphenylacetone and 4-hydroxyacetophenone), some aliphatic ketones (dodecan-2-one and bicyclohept-2-en-6-one) and sulfides (e.g. methyl 4-tolylsulfide). This is Phenylacetone monooxygenase (pamO) from Thermobifida fusca (strain YX).